Reading from the N-terminus, the 81-residue chain is Sulfur carrier protein TusA (81 aa).

The active-site Cysteine persulfide intermediate is C19.

This sequence belongs to the sulfur carrier protein TusA family.

Its subcellular location is the cytoplasm. Sulfur carrier protein which probably makes part of a sulfur-relay system. The polypeptide is Sulfur carrier protein TusA (Shewanella baltica (strain OS185)).